We begin with the raw amino-acid sequence, 365 residues long: 3-amino-4-hydroxybenzoate 4-O-methyltransferase (365 aa).

The segment covering 1–18 (MTVPENAQHTAPDQTQHT) has biased composition (polar residues). The tract at residues 1–32 (MTVPENAQHTAPDQTQHTAPDRTRQAQQAAPD) is disordered. S-adenosyl-L-methionine contacts are provided by residues Asp-227, 253–255 (GDF), and Arg-270. The active-site Proton acceptor is His-273.

This sequence belongs to the class I-like SAM-binding methyltransferase superfamily. Cation-independent O-methyltransferase family.

The enzyme catalyses 3-amino-2,4-dihydroxybenzoate + S-adenosyl-L-methionine = 3-amino-2-hydroxy-4-methoxybenzoate + S-adenosyl-L-homocysteine + H(+). It functions in the pathway antibiotic biosynthesis. In terms of biological role, part of a gene cluster involved in the biosynthesis of cremeomycin, a light-sensitive o-diazoquinone with antibacterial and antiproliferative effects. Catalyzes the methylation of the C4 hydroxyl group of 3-amino-2,4-dihydroxybenzoate (3,2,4-ADHBA) to form 3-amino-2-hydroxy-4-methoxybenzoate (3,2,4-AHMBA). In vitro, can also catalyze the methylation of 3-amino-4-hydroxybenzoate (3,4-AHBA). In Streptomyces cremeus, this protein is 3-amino-4-hydroxybenzoate 4-O-methyltransferase.